A 59-amino-acid polypeptide reads, in one-letter code: UPF0337 protein PP_4561 (59 aa).

A compositionally biased stretch (basic and acidic residues) spans 27–43; it reads TDNEKLRAEGKAQELKG. Positions 27–59 are disordered; that stretch reads TDNEKLRAEGKAQELKGEAQQVKGNVKDAVKKP.

The protein belongs to the UPF0337 (CsbD) family.

The chain is UPF0337 protein PP_4561 from Pseudomonas putida (strain ATCC 47054 / DSM 6125 / CFBP 8728 / NCIMB 11950 / KT2440).